Here is a 516-residue protein sequence, read N- to C-terminus: Keratin, type II cuticular Hb2 (516 aa).

The tract at residues 1–118 (MSCRNFQLSP…PTVQRVKRDE (118 aa)) is head. In terms of domain architecture, IF rod spans 118–429 (EKEQIKCLNN…RLLEGEEHRL (312 aa)). The tract at residues 119 to 153 (KEQIKCLNNRFASFINKVRFLEQKNKLLETKWNFM) is coil 1A. The interval 154–163 (QQQRSCQSNM) is linker 1. The interval 164–264 (EPLFEGYICA…FEEEIGLLQS (101 aa)) is coil 1B. Residues 265 to 281 (QISETSVIVKMDNSREL) are linker 12. The interval 282–425 (DVDGIVAEIK…ATYRRLLEGE (144 aa)) is coil 2. The segment at 426 to 516 (EHRLCEGIGP…VGVGSNSCSR (91 aa)) is tail.

It belongs to the intermediate filament family. In terms of assembly, heterotetramer of two type I and two type II keratins.

In Mus musculus (Mouse), this protein is Keratin, type II cuticular Hb2 (Krt82).